Reading from the N-terminus, the 177-residue chain is Small ribosomal subunit protein eS10z (177 aa).

The disordered stretch occupies residues 90–177; it reads TLKKSAKPGG…AAAPSGSGFP (88 aa). Residues 108-140 are compositionally biased toward basic and acidic residues; it reads DRQRGPPRSDGDRPRFGDRDGYRGGPRGGDEKG. Over residues 141 to 150 the composition is skewed to low complexity; that stretch reads GAPADFQPSF. The segment covering 151–165 has biased composition (gly residues); the sequence is QGGGGRPGFGRGAGG. Over residues 166–177 the composition is skewed to low complexity; that stretch reads YSAAAPSGSGFP.

The protein belongs to the eukaryotic ribosomal protein eS10 family.

It localises to the cytoplasm. This is Small ribosomal subunit protein eS10z (RPS10A) from Arabidopsis thaliana (Mouse-ear cress).